The primary structure comprises 629 residues: MTAEGPSPPARWHRRLPGLWAAALLLLGLPRLSVRADGKFFVLESQNGSQGLQLEAARLSCKSRGAHLASADELRRVVQDCSFAVCTTGWLADGTLGTTVCSKGSGEQQIMRAVDVRIESNPVPGGTYSALCIKDEEKPCGDPPSFPHTILQGRTGLEMGDELLYVCAPGHIMGHRETAFTLLCNSCGEWYGLVQACGKDEAEAHIDYEDNFPDDRSVSFRELMEDSRTEADEDRGQGDSSEEAPKQDRLVSISVGRENIARDKVFVPTTGLPGAGSSVPADSPGSRLLQKHLFWFPAEAFHKPGLEKEVDDDTKKQFSAGDNHSGVKLVPGEPETKVIYGNTDGPSGPFVGKNDSKAGDPVVSSSDESWLDGYPVTEGAWRKTEAEEEEDGDRGDGSVGLDENVLVTPDQPILVEVKKPKSSTLTPSEGMTHSSVLPSQMLDVEALALRPVNASETEGIGDGDLTKYQSTLPWRFITEESPMATLSYELTSSTLEILTVNTVKQTPNHIPSTIMATTQPPVETTVPEIQDSFPYLLSEDFFGQEGPGPGASEELHPTLESCVGDGCPGLSRGPVIATIVTVLCLLLLLAGVGMVWGYRKCQHKSSVYKLNVGQRQARHYHQQIEMEKV.

The signal sequence occupies residues 1-35; it reads MTAEGPSPPARWHRRLPGLWAAALLLLGLPRLSVR. The Extracellular segment spans residues 36–574; the sequence is ADGKFFVLES…DGCPGLSRGP (539 aa). Residues 39-134 enclose the Link domain; that stretch reads KFFVLESQNG…GGTYSALCIK (96 aa). Intrachain disulfides connect C61/C132, C140/C184, and C167/C197. Positions 138–199 constitute a Sushi domain; sequence KPCGDPPSFP…WYGLVQACGK (62 aa). Residues 225–249 show a composition bias toward basic and acidic residues; sequence EDSRTEADEDRGQGDSSEEAPKQDR. Disordered stretches follow at residues 225–252 and 344–403; these read EDSR…RLVS and DGPS…GLDE. Residues 575-595 traverse the membrane as a helical segment; the sequence is VIATIVTVLCLLLLLAGVGMV. Residues 596 to 629 lie on the Cytoplasmic side of the membrane; that stretch reads WGYRKCQHKSSVYKLNVGQRQARHYHQQIEMEKV.

Its subcellular location is the membrane. The polypeptide is Sushi domain-containing protein 5 (SUSD5) (Homo sapiens (Human)).